Reading from the N-terminus, the 309-residue chain is NADH-cytochrome b5 reductase 1 (309 aa).

Residues 30 to 50 (FVPYAVAVTAILAGLKLFTGG) traverse the membrane as a helical segment. Residues 60-165 (TEFQEFVLKE…RGPKGAMVYT (106 aa)) enclose the FAD-binding FR-type domain. Residues 145-160 (TTLKIGDTMKVRGPKG) and 171-208 (HIGMIAGGTGITPMLQIIKAVIRNRPRNGGNDTTKLDL) contribute to the FAD site.

The protein belongs to the flavoprotein pyridine nucleotide cytochrome reductase family. As to quaternary structure, monomer. Component of the 2-(3-amino-3-carboxypropyl)histidine synthase complex composed of dph1, dph2, dph3 and a NADH-dependent reductase, predominantly cbr1. Requires FAD as cofactor.

The protein localises to the mitochondrion outer membrane. The catalysed reaction is 2 Fe(III)-[cytochrome b5] + NADH = 2 Fe(II)-[cytochrome b5] + NAD(+) + H(+). It carries out the reaction 2 Fe(3+)-[Dph3] + NADH = 2 Fe(2+)-[Dph3] + NAD(+) + H(+). It functions in the pathway protein modification; peptidyl-diphthamide biosynthesis. NADH-dependent reductase for dph3 and cytochrome b5. Required for the first step of diphthamide biosynthesis, a post-translational modification of histidine which occurs in elongation factor 2. Dph1 and dph2 transfer a 3-amino-3-carboxypropyl (ACP) group from S-adenosyl-L-methionine (SAM) to a histidine residue, the reaction is assisted by a reduction system comprising dph3 and a NADH-dependent reductase, predominantly cbr1. By reducing dph3, also involved in the formation of the tRNA wobble base modification mcm5s 2U (5-methoxycarbonylmethyl-2-thiouridine), mediated by the elongator complex. The cytochrome b5/NADH cytochrome b5 reductase electron transfer system supports the catalytic activity of several sterol biosynthetic enzymes. In Aspergillus fumigatus (strain ATCC MYA-4609 / CBS 101355 / FGSC A1100 / Af293) (Neosartorya fumigata), this protein is NADH-cytochrome b5 reductase 1 (cbr1).